A 252-amino-acid chain; its full sequence is Probable transcriptional regulatory protein Caur_1043 (252 aa).

A compositionally biased stretch (basic residues) spans 1 to 14; sequence MSGHSKWHTIRRTK. Residues 1–22 form a disordered region; the sequence is MSGHSKWHTIRRTKGVNDQRRG.

Belongs to the TACO1 family.

Its subcellular location is the cytoplasm. This Chloroflexus aurantiacus (strain ATCC 29366 / DSM 635 / J-10-fl) protein is Probable transcriptional regulatory protein Caur_1043.